We begin with the raw amino-acid sequence, 81 residues long: Sulfur carrier protein TusA (81 aa).

The active-site Cysteine persulfide intermediate is Cys20.

This sequence belongs to the sulfur carrier protein TusA family.

The protein localises to the cytoplasm. Functionally, sulfur carrier protein which probably makes part of a sulfur-relay system. In Colwellia psychrerythraea (strain 34H / ATCC BAA-681) (Vibrio psychroerythus), this protein is Sulfur carrier protein TusA.